The following is a 926-amino-acid chain: Tyrosine-protein phosphatase non-receptor type 4 (926 aa).

In terms of domain architecture, FERM spans 29–312; that stretch reads VVCNILLLDN…EHHTFFRLDR (284 aa). Disordered stretches follow at residues 380–412 and 430–475; these read DDRL…TRLR and EVFV…KNSW. Polar residues-rich tracts occupy residues 398–408 and 430–456; these read NHRNSTFTQEG and EVFV…SQET. Residue S474 is modified to Phosphoserine. A PDZ domain is found at 517–589; that stretch reads LIRMKPDENG…DQVVLFIKAS (73 aa). The 257-residue stretch at 655–911 folds into the Tyrosine-protein phosphatase domain; it reads VLTQFDQLYR…RFVCEAILKV (257 aa). Residues D820, 852–858, and Q896 contribute to the substrate site; that span reads CSAGIGR. The Phosphocysteine intermediate role is filled by C852.

This sequence belongs to the protein-tyrosine phosphatase family. Non-receptor class subfamily. In terms of assembly, interacts with MAPK12 (via C-terminus); this interaction abolishes PTPN4 catalytic autoinhibition and thus activates the phosphatase activity. As to quaternary structure, (Microbial infection) Interacts with attenuated rabies virus protein G; this interaction is required for virally-induced apoptosis. In terms of processing, highly phosphorylated on serine and threonine residues but not on tyrosines. Cleaved and activated by calpain I/CAPN1.

The protein resides in the cell membrane. It localises to the cytoplasm. It is found in the cytoskeleton. It catalyses the reaction O-phospho-L-tyrosyl-[protein] + H2O = L-tyrosyl-[protein] + phosphate. Phosphatase that plays a role in immunity, learning, synaptic plasticity or cell homeostasis. Regulates neuronal cell homeostasis by protecting neurons against apoptosis. Negatively regulates TLR4-induced interferon beta production by dephosphorylating adapter TICAM2 and inhibiting subsequent TRAM-TRIF interaction. Also dephosphorylates the immunoreceptor tyrosine-based activation motifs/ITAMs of the TCR zeta subunit and thereby negatively regulates TCR-mediated signaling pathway. May act at junctions between the membrane and the cytoskeleton. This Homo sapiens (Human) protein is Tyrosine-protein phosphatase non-receptor type 4 (PTPN4).